We begin with the raw amino-acid sequence, 256 residues long: Imidazole glycerol phosphate synthase subunit HisF (256 aa).

Active-site residues include D11 and D130.

It belongs to the HisA/HisF family. As to quaternary structure, heterodimer of HisH and HisF.

Its subcellular location is the cytoplasm. It carries out the reaction 5-[(5-phospho-1-deoxy-D-ribulos-1-ylimino)methylamino]-1-(5-phospho-beta-D-ribosyl)imidazole-4-carboxamide + L-glutamine = D-erythro-1-(imidazol-4-yl)glycerol 3-phosphate + 5-amino-1-(5-phospho-beta-D-ribosyl)imidazole-4-carboxamide + L-glutamate + H(+). It participates in amino-acid biosynthesis; L-histidine biosynthesis; L-histidine from 5-phospho-alpha-D-ribose 1-diphosphate: step 5/9. Functionally, IGPS catalyzes the conversion of PRFAR and glutamine to IGP, AICAR and glutamate. The HisF subunit catalyzes the cyclization activity that produces IGP and AICAR from PRFAR using the ammonia provided by the HisH subunit. The protein is Imidazole glycerol phosphate synthase subunit HisF of Thioalkalivibrio sulfidiphilus (strain HL-EbGR7).